Consider the following 216-residue polypeptide: Ribonuclease HII (216 aa).

Residues 28–216 (ACIAGIDEAG…GVKEYVRSEE (189 aa)) form the RNase H type-2 domain. Residues D34, E35, and D126 each coordinate a divalent metal cation.

The protein belongs to the RNase HII family. Requires Mn(2+) as cofactor. It depends on Mg(2+) as a cofactor.

The protein localises to the cytoplasm. The enzyme catalyses Endonucleolytic cleavage to 5'-phosphomonoester.. Its function is as follows. Endonuclease that specifically degrades the RNA of RNA-DNA hybrids. The chain is Ribonuclease HII from Geotalea uraniireducens (strain Rf4) (Geobacter uraniireducens).